The primary structure comprises 404 residues: Deoxyguanosinetriphosphate triphosphohydrolase-like protein (404 aa).

Residues 1 to 33 (MSVGMAAPRAAFSCDPDRSRGRQFAEPPSSNRS) form a disordered region. The HD domain maps to 69–217 (RLTHSLEVAQ…AALADDIAYD (149 aa)).

The protein belongs to the dGTPase family. Type 2 subfamily.

In Rhodopseudomonas palustris (strain HaA2), this protein is Deoxyguanosinetriphosphate triphosphohydrolase-like protein.